The chain runs to 119 residues: UPF0292 protein TV1259 (119 aa).

Residues 11–93 (SIPIIVEGRN…YVDLYLWNFI (83 aa)) enclose the Toprim domain. Positions 17, 62, and 64 each coordinate Mg(2+).

This sequence belongs to the UPF0292 family. Mg(2+) is required as a cofactor.

The sequence is that of UPF0292 protein TV1259 from Thermoplasma volcanium (strain ATCC 51530 / DSM 4299 / JCM 9571 / NBRC 15438 / GSS1).